A 444-amino-acid chain; its full sequence is Phosphoglucosamine mutase (444 aa).

Ser100 serves as the catalytic Phosphoserine intermediate. Mg(2+) is bound by residues Ser100, Asp234, Asp236, and Asp238. Ser100 is subject to Phosphoserine.

It belongs to the phosphohexose mutase family. The cofactor is Mg(2+). In terms of processing, activated by phosphorylation.

It catalyses the reaction alpha-D-glucosamine 1-phosphate = D-glucosamine 6-phosphate. Functionally, catalyzes the conversion of glucosamine-6-phosphate to glucosamine-1-phosphate. The protein is Phosphoglucosamine mutase of Rubrobacter xylanophilus (strain DSM 9941 / JCM 11954 / NBRC 16129 / PRD-1).